Here is a 593-residue protein sequence, read N- to C-terminus: A-type ATP synthase subunit A (593 aa).

236 to 243 (GPFGSGKT) contributes to the ATP binding site.

It belongs to the ATPase alpha/beta chains family. As to quaternary structure, has multiple subunits with at least A(3), B(3), C, D, E, F, H, I and proteolipid K(x).

The protein localises to the cell membrane. It carries out the reaction ATP + H2O + 4 H(+)(in) = ADP + phosphate + 5 H(+)(out). Its function is as follows. Produces ATP from ADP in the presence of a proton gradient across the membrane. The archaeal alpha chain is a catalytic subunit. Functionally, component of the A-type ATP synthase that produces ATP from ADP in the presence of a proton gradient across the membrane. The A chain is the catalytic subunit. The protein is A-type ATP synthase subunit A of Pyrobaculum aerophilum (strain ATCC 51768 / DSM 7523 / JCM 9630 / CIP 104966 / NBRC 100827 / IM2).